Reading from the N-terminus, the 333-residue chain is Cap-specific mRNA (nucleoside-2'-O-)-methyltransferase (333 aa).

Residue Y22 coordinates mRNA. Residues Q39, Y66, G68, G72, D95, R97, V116, and D138 each coordinate S-adenosyl-L-methionine. Residues 169–249 (PVASSLKWRC…NKIVRNKVVV (81 aa)) form a binding to NPH-I region. Residues 169–333 (PVASSLKWRC…NSKRSVRSNK (165 aa)) are binding to Rap94. K175 (for methyltransferase activity) is an active-site residue. Residues 177 to 180 (RCPF), D182, 205 to 207 (SAE), and E233 each bind mRNA. Residues 305–333 (SHEPIQRKISSKNSMSKNRNSKRSVRSNK) form a disordered region. Residues 311 to 322 (RKISSKNSMSKN) are compositionally biased toward low complexity. Residues 323 to 333 (RNSKRSVRSNK) show a composition bias toward basic residues.

It belongs to the class I-like SAM-binding methyltransferase superfamily. Poxvirus/kinetoplastid 2'-O-MTase family. As to quaternary structure, interacts with poly(A) polymerase catalytic subunit OPG063. Interacts with OPG109 and OPG123; these interactions might help linking transcription to capping and polyadenylation.

The protein resides in the virion. It carries out the reaction a 5'-end (N(7)-methyl 5'-triphosphoguanosine)-ribonucleoside in mRNA + S-adenosyl-L-methionine = a 5'-end (N(7)-methyl 5'-triphosphoguanosine)-(2'-O-methyl-ribonucleoside) in mRNA + S-adenosyl-L-homocysteine + H(+). Its function is as follows. Displays methyltransferase, positive regulation of the poly(A) polymerase and transcription elongation activities. Involved in the modification of both mRNA ends and in intermediate and late gene positive transcription elongation. At the mRNAs 5' end, methylates the ribose 2' OH group of the first transcribed nucleotide, thereby producing a 2'-O-methylpurine cap. At the 3' end, functions as a processivity factor which stimulates the activity of the viral poly(A) polymerase OPG063 that creates mRNA's poly(A) tail. In the presence of OPG102, OPG063 does not dissociate from the RNA allowing tail elongation to around 250 adenylates. The polypeptide is Cap-specific mRNA (nucleoside-2'-O-)-methyltransferase (OPG102) (Vaccinia virus (strain Western Reserve) (VACV)).